Reading from the N-terminus, the 211-residue chain is Potassium-transporting ATPase KdpC subunit (211 aa).

Residues 13–35 (VVTMVLTGLLYPLAVTGLAQLLF) form a helical membrane-spanning segment.

This sequence belongs to the KdpC family. As to quaternary structure, the system is composed of three essential subunits: KdpA, KdpB and KdpC.

It is found in the cell inner membrane. In terms of biological role, part of the high-affinity ATP-driven potassium transport (or Kdp) system, which catalyzes the hydrolysis of ATP coupled with the electrogenic transport of potassium into the cytoplasm. This subunit acts as a catalytic chaperone that increases the ATP-binding affinity of the ATP-hydrolyzing subunit KdpB by the formation of a transient KdpB/KdpC/ATP ternary complex. The chain is Potassium-transporting ATPase KdpC subunit from Myxococcus xanthus (strain DK1622).